Reading from the N-terminus, the 221-residue chain is Small ribosomal subunit protein uS2c (221 aa).

This sequence belongs to the universal ribosomal protein uS2 family.

It localises to the plastid. Its subcellular location is the chloroplast. The polypeptide is Small ribosomal subunit protein uS2c (rps2) (Cyanidioschyzon merolae (strain NIES-3377 / 10D) (Unicellular red alga)).